We begin with the raw amino-acid sequence, 184 residues long: ATP synthase subunit b, chloroplastic (184 aa).

The chain crosses the membrane as a helical span at residues 27-49; that stretch reads LATNPINLSVVFGVLIFFGKGVL.

Belongs to the ATPase B chain family. F-type ATPases have 2 components, F(1) - the catalytic core - and F(0) - the membrane proton channel. F(1) has five subunits: alpha(3), beta(3), gamma(1), delta(1), epsilon(1). F(0) has four main subunits: a(1), b(1), b'(1) and c(10-14). The alpha and beta chains form an alternating ring which encloses part of the gamma chain. F(1) is attached to F(0) by a central stalk formed by the gamma and epsilon chains, while a peripheral stalk is formed by the delta, b and b' chains.

It is found in the plastid. The protein resides in the chloroplast thylakoid membrane. In terms of biological role, f(1)F(0) ATP synthase produces ATP from ADP in the presence of a proton or sodium gradient. F-type ATPases consist of two structural domains, F(1) containing the extramembraneous catalytic core and F(0) containing the membrane proton channel, linked together by a central stalk and a peripheral stalk. During catalysis, ATP synthesis in the catalytic domain of F(1) is coupled via a rotary mechanism of the central stalk subunits to proton translocation. Component of the F(0) channel, it forms part of the peripheral stalk, linking F(1) to F(0). The polypeptide is ATP synthase subunit b, chloroplastic (Barbarea verna (Land cress)).